The following is a 533-amino-acid chain: MSTSRVNDEPHKLSATAAALCPLSNCQFSGVVISQIADEQRLEFTNKYKGSCTLLCSYDSQGVVLRIVLDNDQGHVLKEYMIAADTDAAQMGKRSYAVSLESDNLVLRFASEQDQQLFRKVVENVKHLRPKSVFSQRTEESSASQYFQFYGYLSQQQNMMQDYVRTSTYQRAILGNAIDFQDKIILDVGAGSGILSFFAVQAGAAKVYAIEASNMAQYAQQLVESNNVQHKISVIPGKIEEIELPEKVDVIISEPMGYMLYNERMLETYLHARKWLKPQGKMYPTHGDLHIAPFSDESLYSEQYNKANFWYQSAFHGVDLTTLHKEGMKEYFRQPIVDTFDIRICMAKSVRHVCDFLNDKEDDLHKIDIPLQFHILQTGICHGLAFWFDVEFSGSSQNVWLSTSPTAPLTHWYQVRCLLPMPIFIKQGQTLTGRVLLEANRRQSYDVTIDLHIEGTLISSSNTLDLKNPYFRYTGAPVQAPPGTSTQSPSEQYWTQMDTQGTRNTTGMLNGGLSVNGIGDGGMDITHGLIHPH.

The SAM-dependent MTase PRMT-type domain maps to 143–452; sequence ASQYFQFYGY…QSYDVTIDLH (310 aa). Residues Gln156, Arg165, Gly189, Glu211, Glu240, and Thr268 each contribute to the S-adenosyl-L-methionine site. Arg503 is subject to Asymmetric dimethylarginine; by autocatalysis.

This sequence belongs to the class I-like SAM-binding methyltransferase superfamily. Protein arginine N-methyltransferase family. Homodimer. The dimethylated protein is the major form.

It is found in the cytoplasm. It localises to the nucleus. It catalyses the reaction L-arginyl-[protein] + 2 S-adenosyl-L-methionine = N(omega),N(omega)-dimethyl-L-arginyl-[protein] + 2 S-adenosyl-L-homocysteine + 2 H(+). In terms of biological role, methylates (mono- and asymmetric dimethylation) the guanidino nitrogens of arginyl residues in proteins. May methylate histone H3 at 'Arg-17' and activate transcription via chromatin remodeling. The sequence is that of Histone-arginine methyltransferase CARMER (Art4) from Drosophila willistoni (Fruit fly).